The primary structure comprises 200 residues: Large ribosomal subunit protein uL4 (200 aa).

Residues 43 to 71 (RAQKTRAEVSGSGKKPWRQKGTGRARSGD) are disordered.

This sequence belongs to the universal ribosomal protein uL4 family. In terms of assembly, part of the 50S ribosomal subunit.

Functionally, one of the primary rRNA binding proteins, this protein initially binds near the 5'-end of the 23S rRNA. It is important during the early stages of 50S assembly. It makes multiple contacts with different domains of the 23S rRNA in the assembled 50S subunit and ribosome. Its function is as follows. Forms part of the polypeptide exit tunnel. This chain is Large ribosomal subunit protein uL4, found in Histophilus somni (strain 2336) (Haemophilus somnus).